The following is a 207-amino-acid chain: Ribosomal RNA large subunit methyltransferase E (207 aa).

The disordered stretch occupies residues 1–20; that stretch reads MKRDPTKGRKTPDHYARKAK. 5 residues coordinate S-adenosyl-L-methionine: Gly-56, Trp-58, Asp-76, Asp-94, and Asp-116. Lys-156 (proton acceptor) is an active-site residue.

The protein belongs to the class I-like SAM-binding methyltransferase superfamily. RNA methyltransferase RlmE family.

The protein localises to the cytoplasm. The catalysed reaction is uridine(2552) in 23S rRNA + S-adenosyl-L-methionine = 2'-O-methyluridine(2552) in 23S rRNA + S-adenosyl-L-homocysteine + H(+). Specifically methylates the uridine in position 2552 of 23S rRNA at the 2'-O position of the ribose in the fully assembled 50S ribosomal subunit. The sequence is that of Ribosomal RNA large subunit methyltransferase E from Desulfosudis oleivorans (strain DSM 6200 / JCM 39069 / Hxd3) (Desulfococcus oleovorans).